The chain runs to 2089 residues: Mediator of DNA damage checkpoint protein 1 (2089 aa).

The segment covering 1 to 19 (MEDTQAIDWDVEEEEETEQ) has biased composition (acidic residues). The disordered stretch occupies residues 1–22 (MEDTQAIDWDVEEEEETEQSSE). Residues 1–150 (MEDTQAIDWD…SRGPLTVEET (150 aa)) are interaction with CHEK2. An interaction with the MRN complex region spans residues 2-220 (EDTQAIDWDV…PFAFNLNSDT (219 aa)). The residue at position 4 (Thr-4) is a Phosphothreonine; by ATM. Positions 54 to 105 (NVVGRMPDCSVALPFPSISKQHAEIEILAWDKAPILRDCGSLNGTQILRPPK) constitute an FHA domain. Ser-108 is modified (phosphoserine). Residues 145-568 (LTVEETPRVQ…PAKLLVVSLE (424 aa)) form a required for nuclear localization (NLS1) region. Thr-146 is subject to Phosphothreonine. A Phosphoserine; by CK2 modification is found at Ser-168. Phosphoserine is present on Ser-176. 3 disordered regions span residues 185-248 (RTTS…AKQS), 261-280 (DQPL…GAGN), and 286-317 (GVIL…AEVH). A phosphoserine; by CK2 mark is found at Ser-196 and Ser-218. Thr-220 bears the Phosphothreonine; by CK2 mark. A compositionally biased stretch (basic and acidic residues) spans 261-274 (DQPLVKERDNDTKV). Phosphoserine; by CK2 is present on Ser-299. Thr-301 carries the phosphothreonine; by CK2 modification. The span at 306–317 (DSRPPGRPAEVH) shows a compositional bias: basic and acidic residues. The residue at position 329 (Ser-329) is a Phosphoserine; by CK2. Thr-331 bears the Phosphothreonine; by CK2 mark. Ser-372 carries the post-translational modification Phosphoserine. Ser-376 bears the Phosphoserine; by CK2 mark. Thr-378 is modified (phosphothreonine; by CK2). Phosphoserine is present on residues Ser-394 and Ser-397. Ser-402 carries the post-translational modification Phosphoserine; by CK2. Phosphothreonine; by CK2 is present on Thr-404. A Phosphoserine modification is found at Ser-411. Position 449 is a phosphothreonine (Thr-449). Ser-453 carries the phosphoserine; by CK2 modification. Thr-455 is modified (phosphothreonine; by CK2). A disordered region spans residues 482-515 (RAHSEKDQPPFGDSDDSVEADKSSPGIHLERSQA). Phosphoserine occurs at positions 485, 495, 498, 504, 505, and 513. Thr-523 is subject to Phosphothreonine. Ser-590 is modified (phosphoserine). Lys-616 participates in a covalent cross-link: Glycyl lysine isopeptide (Lys-Gly) (interchain with G-Cter in SUMO1); alternate. Residue Lys-616 forms a Glycyl lysine isopeptide (Lys-Gly) (interchain with G-Cter in SUMO2); alternate linkage. Disordered regions lie at residues 653 to 689 (DTLG…DNYG) and 780 to 1887 (SPPR…TKLN). Residues 671–685 (GREREQHVGGTKDSE) show a composition bias toward basic and acidic residues. A phosphoserine mark is found at Ser-780 and Ser-793. Lys-812 carries the post-translational modification N6-acetyllysine. Basic and acidic residues-rich tracts occupy residues 819 to 844 (ETAE…ERQT), 851 to 862 (ELTKGKQDREQK), 868 to 905 (DTQR…EKQV), and 914 to 951 (AFER…RGEP). Phosphoserine is present on residues Ser-955 and Ser-998. Residues 955–965 (SQDQKGQASSP) are compositionally biased toward polar residues. Positions 1016 to 1031 (KASRIRAAEKVSRGDQ) are enriched in basic and acidic residues. Ser-1033 carries the phosphoserine modification. Residues 1040–1051 (PTVPEAPAPPQK) are compositionally biased toward pro residues. 2 positions are modified to phosphoserine: Ser-1068 and Ser-1086. The segment covering 1103–1113 (PKPKIRTRKSS) has biased composition (basic residues). Residues 1129–1156 (PSTSTAQPVTPKPTSQATRSRTNRSSVK) are compositionally biased toward polar residues. The interval 1148–1610 (SRTNRSSVKT…TNRSSVKTPE (463 aa)) is interaction with the PRKDC complex. The residue at position 1157 (Thr-1157) is a Phosphothreonine. The span at 1169–1187 (QPSTSTDQPVTSEPTSQVT) shows a compositional bias: polar residues. Phosphothreonine is present on Thr-1198. The segment covering 1210-1228 (QPSTSTDRPVTSEPTSQAT) has biased composition (polar residues). A Phosphoserine modification is found at Ser-1235. At Thr-1239 the chain carries Phosphothreonine. Polar residues predominate over residues 1251-1268 (QPSTSTDQPVTSEPTYQA). Residues Thr-1280 and Thr-1302 each carry the phosphothreonine modification. Low complexity-rich tracts occupy residues 1304–1318 (KPTS…NMSS) and 1347–1359 (TSRT…NMSS). The segment covering 1375 to 1391 (PSTSTEQPVTPEPTSRA) has biased composition (polar residues). Phosphoserine occurs at positions 1399 and 1400. Position 1402 is an N6-acetyllysine (Lys-1402). The residue at position 1403 (Thr-1403) is a Phosphothreonine. Lys-1413 is covalently cross-linked (Glycyl lysine isopeptide (Lys-Gly) (interchain with G-Cter in SUMO1); alternate). Residue Lys-1413 forms a Glycyl lysine isopeptide (Lys-Gly) (interchain with G-Cter in SUMO2); alternate linkage. 4 stretches are compositionally biased toward polar residues: residues 1416–1444 (PSTS…SVKT), 1456–1475 (QPST…QATR), 1498–1514 (ASAS…TSRT), and 1538–1555 (QPST…TSRA). Thr-1425 and Thr-1466 each carry phosphothreonine. A Phosphothreonine modification is found at Thr-1548. Ser-1564 is modified (phosphoserine). Thr-1567 and Thr-1589 each carry phosphothreonine. Positions 1579-1596 (QPSTSRNQLVTPEPTSRA) are enriched in polar residues. Ser-1604 bears the Phosphoserine mark. The residue at position 1608 (Thr-1608) is a Phosphothreonine. A compositionally biased stretch (pro residues) spans 1611 to 1620 (PVVPTAPEPH). The span at 1624–1636 (STDQPVTPKLTSR) shows a compositional bias: polar residues. A phosphothreonine mark is found at Thr-1630, Thr-1664, and Thr-1671. Residues 1678-1689 (GGQSKTLRSSTV) are compositionally biased toward polar residues. Ser-1681 is subject to Phosphoserine. Thr-1697 carries the phosphothreonine modification. Polar residues predominate over residues 1698 to 1719 (PEFQSPVTTDQPISPEPITQPS). The segment at 1698 to 2089 (PEFQSPVTTD…VLSPLEMSST (392 aa)) is required for nuclear localization (NLS2). A phosphoserine mark is found at Ser-1702 and Ser-1711. Lys-1740 participates in a covalent cross-link: Glycyl lysine isopeptide (Lys-Gly) (interchain with G-Cter in SUMO2). Ser-1775 is subject to Phosphoserine. Lys-1790 is covalently cross-linked (Glycyl lysine isopeptide (Lys-Gly) (interchain with G-Cter in SUMO2)). Thr-1800 bears the Phosphothreonine mark. At Ser-1820 the chain carries Phosphoserine. Residues 1823–1836 (HQKQPQRGEVSQKT) show a composition bias toward polar residues. Lys-1840 participates in a covalent cross-link: Glycyl lysine isopeptide (Lys-Gly) (interchain with G-Cter in SUMO1); alternate. Lys-1840 is covalently cross-linked (Glycyl lysine isopeptide (Lys-Gly) (interchain with G-Cter in SUMO2); alternate). The span at 1847 to 1857 (AEKPGKEEDVV) shows a compositional bias: basic and acidic residues. A Phosphothreonine modification is found at Thr-1858. BRCT domains follow at residues 1892–1970 (APKV…EYVV) and 1991–2082 (RERR…FVLS). Position 1943 is an omega-N-methylarginine (Arg-1943).

Homodimer. Interacts with H2AX, which requires phosphorylation of H2AX on 'Ser-139'. Interacts with the MRN complex, composed of MRE11, RAD50, and NBN. Interacts with CHEK2, which requires ATM-mediated phosphorylation of 'Thr-68' within the FHA domain of CHEK2. Interacts constitutively with the BRCA1-BARD1 complex, SMC1A and TP53BP1. Interacts with ATM and FANCD2, and these interactions are reduced upon DNA damage. Also interacts with the PRKDC complex, composed of XRCC6/KU70, XRCC5/KU80 and PRKDC/XRCC7. This interaction may be required for PRKDC autophosphorylation, which is essential for DNA double strand break (DSB) repair. When phosphorylated by ATM, interacts with RNF8 (via FHA domain). Interacts with CEP164. When phosphorylated, interacts with APTX (via FHA-like domain). Interacts (when phosphorylated) with TOPBP1; promoting TOPBP1 localization to DNA damage sites during mitosis. Interacts (when phosphorylated) with NBN; promoting NBN and MRN complex localization to DNA damage sites. Phosphorylated upon exposure to ionizing radiation (IR), ultraviolet radiation (UV), and hydroxyurea (HU). Phosphorylation in response to IR requires ATM, NBN, and possibly CHEK2. Also phosphorylated during the G2/M phase of the cell cycle and during activation of the mitotic spindle checkpoint. Phosphorylation at Thr-4 by ATM stabilizes and enhances homodimerization via the FHA domain. Phosphorylated at Ser-168 and Ser-196 by CK2 in response to DNA damage during mitosis, promoting interaction with TOPBP1. Phosphorylated by CK2 in response to DNA damage, promoting interaction with NBN and recruitment of the MRN complex to DNA damage sites. In terms of processing, sumoylation at Lys-1840 by PIAS4 following DNA damage promotes ubiquitin-mediated degradation. Post-translationally, ubiquitinated by RNF4, leading to proteasomal degradation; undergoes 'Lys-48'-linked polyubiquitination. Highly expressed in testis.

It is found in the nucleus. The protein resides in the chromosome. Its function is as follows. Histone reader protein required for checkpoint-mediated cell cycle arrest in response to DNA damage within both the S phase and G2/M phases of the cell cycle. Specifically recognizes and binds histone H2AX phosphorylated at 'Ser-139', a marker of DNA damage, serving as a scaffold for the recruitment of DNA repair and signal transduction proteins to discrete foci of DNA damage sites. Also required for downstream events subsequent to the recruitment of these proteins. These include phosphorylation and activation of the ATM, CHEK1 and CHEK2 kinases, and stabilization of TP53/p53 and apoptosis. ATM and CHEK2 may also be activated independently by a parallel pathway mediated by TP53BP1. Required for chromosomal stability during mitosis by promoting recruitment of TOPBP1 to DNA double strand breaks (DSBs): TOPBP1 forms filamentous assemblies that bridge MDC1 and tether broken chromosomes during mitosis. Required for the repair of DSBs via homologous recombination by promoting recruitment of NBN component of the MRN complex to DSBs. The polypeptide is Mediator of DNA damage checkpoint protein 1 (Homo sapiens (Human)).